A 78-amino-acid polypeptide reads, in one-letter code: Translation initiation factor IF-1, chloroplastic (78 aa).

The region spanning 1 to 72 is the S1-like domain; it reads MKKQNLIEME…TKGRITYRLR (72 aa).

This sequence belongs to the IF-1 family. As to quaternary structure, component of the 30S ribosomal translation pre-initiation complex which assembles on the 30S ribosome in the order IF-2 and IF-3, IF-1 and N-formylmethionyl-tRNA(fMet); mRNA recruitment can occur at any time during PIC assembly.

It localises to the plastid. Its subcellular location is the chloroplast. Its function is as follows. One of the essential components for the initiation of protein synthesis. Stabilizes the binding of IF-2 and IF-3 on the 30S subunit to which N-formylmethionyl-tRNA(fMet) subsequently binds. Helps modulate mRNA selection, yielding the 30S pre-initiation complex (PIC). Upon addition of the 50S ribosomal subunit IF-1, IF-2 and IF-3 are released leaving the mature 70S translation initiation complex. This is Translation initiation factor IF-1, chloroplastic from Chaetosphaeridium globosum (Charophycean green alga).